The sequence spans 643 residues: DNA gyrase subunit B (643 aa).

In terms of domain architecture, Toprim spans serine 428–proline 542. Positions 434, 507, and 509 each coordinate Mg(2+).

It belongs to the type II topoisomerase GyrB family. As to quaternary structure, heterotetramer, composed of two GyrA and two GyrB chains. In the heterotetramer, GyrA contains the active site tyrosine that forms a transient covalent intermediate with DNA, while GyrB binds cofactors and catalyzes ATP hydrolysis. It depends on Mg(2+) as a cofactor. Mn(2+) is required as a cofactor. Requires Ca(2+) as cofactor.

It localises to the cytoplasm. The enzyme catalyses ATP-dependent breakage, passage and rejoining of double-stranded DNA.. A type II topoisomerase that negatively supercoils closed circular double-stranded (ds) DNA in an ATP-dependent manner to modulate DNA topology and maintain chromosomes in an underwound state. Negative supercoiling favors strand separation, and DNA replication, transcription, recombination and repair, all of which involve strand separation. Also able to catalyze the interconversion of other topological isomers of dsDNA rings, including catenanes and knotted rings. Type II topoisomerases break and join 2 DNA strands simultaneously in an ATP-dependent manner. In Staphylococcus epidermidis (strain ATCC 35984 / DSM 28319 / BCRC 17069 / CCUG 31568 / BM 3577 / RP62A), this protein is DNA gyrase subunit B.